Consider the following 311-residue polypeptide: Protoheme IX farnesyltransferase (311 aa).

Transmembrane regions (helical) follow at residues 39 to 59 (LLAM…PIGE), 61 to 81 (LPEI…AGAF), 111 to 131 (ALVL…VASP), 133 to 153 (AALF…MWSK), 162 to 182 (IGSV…SGDL), 187 to 207 (IIGL…AIAI), 246 to 266 (FFFV…SLIW), and 287 to 307 (FVFS…FSLL).

This sequence belongs to the UbiA prenyltransferase family. Protoheme IX farnesyltransferase subfamily. As to quaternary structure, interacts with CtaA.

Its subcellular location is the cell membrane. The catalysed reaction is heme b + (2E,6E)-farnesyl diphosphate + H2O = Fe(II)-heme o + diphosphate. The protein operates within porphyrin-containing compound metabolism; heme O biosynthesis; heme O from protoheme: step 1/1. Converts heme B (protoheme IX) to heme O by substitution of the vinyl group on carbon 2 of heme B porphyrin ring with a hydroxyethyl farnesyl side group. The chain is Protoheme IX farnesyltransferase from Shouchella clausii (strain KSM-K16) (Alkalihalobacillus clausii).